A 255-amino-acid chain; its full sequence is uncharacterized protein (255 aa).

A signal peptide spans 1 to 23 (MKRLNKLVLGIIFLFLVISITAG). C24 is lipidated: N-palmitoyl cysteine. The S-diacylglycerol cysteine moiety is linked to residue C24.

It belongs to the staphylococcal tandem lipoprotein family.

It is found in the cell membrane. This is an uncharacterized protein from Staphylococcus aureus (strain USA300).